We begin with the raw amino-acid sequence, 305 residues long: P2Y purinoceptor 14 (305 aa).

Topologically, residues 1–29 are extracellular; it reads MDNTTTTEPPKQPCTRNTLITQQIIPMLY. Asparagine 3 is a glycosylation site (N-linked (GlcNAc...) asparagine). A helical transmembrane segment spans residues 30–50; sequence CVVFITGVLLNGISGWIFFYV. Residues 51–55 are Cytoplasmic-facing; it reads PSSKS. A helical transmembrane segment spans residues 56 to 76; the sequence is FIIYLKNIVVADFLMGLTFPF. Topologically, residues 77-96 are extracellular; that stretch reads KVLSDSGLGPWQLNVFVFRV. The chain crosses the membrane as a helical span at residues 97–117; the sequence is SAVIFYVNMYVSIAFFGLISF. Topologically, residues 118–139 are cytoplasmic; it reads DRYYKIVKPLLVSIVQSVNYSK. The chain crosses the membrane as a helical span at residues 140–160; the sequence is VLSVLVWVLMLLLAVPNIILT. Asparagine 161 is a glycosylation site (N-linked (GlcNAc...) asparagine). The Extracellular portion of the chain corresponds to 161–188; the sequence is NQSVKDVTNIQCMELKNELGRKWHKASN. Residues 189-209 form a helical membrane-spanning segment; it reads YVFVSIFWIVFLLLTVFYMAI. The Cytoplasmic portion of the chain corresponds to 210-234; that stretch reads TRKIFKSHLKSRKNSISVKRKSSRN. The helical transmembrane segment at 235–255 threads the bilayer; the sequence is IFSIVLAFVACFAPYHVARIP. Residues 256–278 are Extracellular-facing; the sequence is YTKSQTEGHYSCQAKETLLYTKE. The chain crosses the membrane as a helical span at residues 279–299; the sequence is FTLLLSAANVCLDPISISSYA. At 300-305 the chain is on the cytoplasmic side; sequence SRLEKS.

Belongs to the G-protein coupled receptor 1 family.

It is found in the cell membrane. Functionally, receptor for UDP-glucose coupled to G-proteins. This Rattus norvegicus (Rat) protein is P2Y purinoceptor 14 (P2ry14).